A 308-amino-acid chain; its full sequence is Phosphoribosylaminoimidazole-succinocarboxamide synthase (308 aa).

The protein belongs to the SAICAR synthetase family.

It catalyses the reaction 5-amino-1-(5-phospho-D-ribosyl)imidazole-4-carboxylate + L-aspartate + ATP = (2S)-2-[5-amino-1-(5-phospho-beta-D-ribosyl)imidazole-4-carboxamido]succinate + ADP + phosphate + 2 H(+). It functions in the pathway purine metabolism; IMP biosynthesis via de novo pathway; 5-amino-1-(5-phospho-D-ribosyl)imidazole-4-carboxamide from 5-amino-1-(5-phospho-D-ribosyl)imidazole-4-carboxylate: step 1/2. This is Phosphoribosylaminoimidazole-succinocarboxamide synthase from Xylella fastidiosa (strain Temecula1 / ATCC 700964).